The primary structure comprises 690 residues: uncharacterized protein (690 aa).

This is an uncharacterized protein from Acanthamoeba polyphaga (Amoeba).